Reading from the N-terminus, the 417-residue chain is Serine--tRNA ligase (417 aa).

226–228 (TSE) contacts L-serine. Residues 257-259 (RRE) and Val-273 each bind ATP. Glu-280 lines the L-serine pocket. 344–347 (ELTS) is a binding site for ATP. L-serine is bound at residue Thr-379.

The protein belongs to the class-II aminoacyl-tRNA synthetase family. Type-1 seryl-tRNA synthetase subfamily. Homodimer. The tRNA molecule binds across the dimer.

Its subcellular location is the cytoplasm. It catalyses the reaction tRNA(Ser) + L-serine + ATP = L-seryl-tRNA(Ser) + AMP + diphosphate + H(+). The enzyme catalyses tRNA(Sec) + L-serine + ATP = L-seryl-tRNA(Sec) + AMP + diphosphate + H(+). The protein operates within aminoacyl-tRNA biosynthesis; selenocysteinyl-tRNA(Sec) biosynthesis; L-seryl-tRNA(Sec) from L-serine and tRNA(Sec): step 1/1. Its function is as follows. Catalyzes the attachment of serine to tRNA(Ser). Is also able to aminoacylate tRNA(Sec) with serine, to form the misacylated tRNA L-seryl-tRNA(Sec), which will be further converted into selenocysteinyl-tRNA(Sec). The sequence is that of Serine--tRNA ligase from Mycolicibacterium smegmatis (strain ATCC 700084 / mc(2)155) (Mycobacterium smegmatis).